We begin with the raw amino-acid sequence, 260 residues long: MKVRTLTAIIALIVFLPVLLKGGLILMLFSYLLAFIALKELLNMNMIKFLSIPGIISALGILIIMLPQDAGSWVNDLQLKSLIAMSFILLSYTVLSKNRFSFMDAAFCLMSIAYVGIGFMYLYETRSEGLHYILFAFLVVWLTDTGAYIFGRLMGKHKLWPVISPNKTVEGFVGGLICSLIVPLVMMIFVDFNIALWLLLIITIILSMFGQLGDLVESGFKRHFGVKDSGRILPGHGGILDRFDSFMFVLPLLNILLIQI.

Transmembrane regions (helical) follow at residues I9 to F29, M46 to L66, A70 to L90, F102 to L122, L130 to F150, F172 to F192, and L196 to V216.

Belongs to the CDS family.

The protein localises to the cell membrane. It catalyses the reaction a 1,2-diacyl-sn-glycero-3-phosphate + CTP + H(+) = a CDP-1,2-diacyl-sn-glycerol + diphosphate. It functions in the pathway phospholipid metabolism; CDP-diacylglycerol biosynthesis; CDP-diacylglycerol from sn-glycerol 3-phosphate: step 3/3. The polypeptide is Phosphatidate cytidylyltransferase (cdsA) (Staphylococcus saprophyticus subsp. saprophyticus (strain ATCC 15305 / DSM 20229 / NCIMB 8711 / NCTC 7292 / S-41)).